We begin with the raw amino-acid sequence, 69 residues long: Large ribosomal subunit protein uL29 (69 aa).

Belongs to the universal ribosomal protein uL29 family.

The sequence is that of Large ribosomal subunit protein uL29 from Polaromonas sp. (strain JS666 / ATCC BAA-500).